Here is a 125-residue protein sequence, read N- to C-terminus: Nuclear envelope phosphatase-regulatory subunit 1 (125 aa).

Residue Met1 is modified to N-acetylmethionine. 2 helical membrane passes run 33 to 53 (MLLI…LIDP) and 65 to 85 (WNHP…FAGI).

This sequence belongs to the CNEP1R1 family. As to quaternary structure, interacts with CTDNEP1; the complex dephosphorylates LPIN1 and LPIN2.

It is found in the nucleus membrane. It localises to the cytoplasm. Functionally, forms with the serine/threonine protein phosphatase CTDNEP1 an active complex which dephosphorylates and may activate LPIN1 and LPIN2. LPIN1 and LPIN2 are phosphatidate phosphatases that catalyze the conversion of phosphatidic acid to diacylglycerol and control the metabolism of fatty acids at different levels. May indirectly modulate the lipid composition of nuclear and/or endoplasmic reticulum membranes and be required for proper nuclear membrane morphology and/or dynamics. May also indirectly regulate the production of lipid droplets and triacylglycerol. This Bos taurus (Bovine) protein is Nuclear envelope phosphatase-regulatory subunit 1 (CNEP1R1).